Here is a 299-residue protein sequence, read N- to C-terminus: MKKLGTDLLKRGFAKMVKHGVVMDVTNVEQAQIAEDAGAAAVMALERVPADIRVQGGVARMSDPEMILEIKDAVSIPVMAKARIGHYVEAQVLESIGVDMVDESEVLTPADEVNHIDKRAFTAPFVCGARNLGEALRRIDEGAAMIRTKGEAGTGNVVEAVKHMRAVNEGIARVVGYKEMGLEAELIQMARNELKVPMELISEVAELKRLPVVNFAAGGIATPADAALMMQMGCDGVFVGSGIFKSGNPEVRAKAIVEATYNFDKADVIGEVSKNLGEAMVGINIDEIPEEKLLAKRGI.

D-ribose 5-phosphate is bound at residue D24. Residue K81 is the Schiff-base intermediate with D-ribose 5-phosphate of the active site. Residue G153 coordinates D-ribose 5-phosphate. D-glyceraldehyde 3-phosphate is bound at residue R165. D-ribose 5-phosphate contacts are provided by residues G219 and 240–241; that span reads GS.

It belongs to the PdxS/SNZ family. In the presence of PdxT, forms a dodecamer of heterodimers.

The catalysed reaction is aldehydo-D-ribose 5-phosphate + D-glyceraldehyde 3-phosphate + L-glutamine = pyridoxal 5'-phosphate + L-glutamate + phosphate + 3 H2O + H(+). The protein operates within cofactor biosynthesis; pyridoxal 5'-phosphate biosynthesis. Catalyzes the formation of pyridoxal 5'-phosphate from ribose 5-phosphate (RBP), glyceraldehyde 3-phosphate (G3P) and ammonia. The ammonia is provided by the PdxT subunit. Can also use ribulose 5-phosphate and dihydroxyacetone phosphate as substrates, resulting from enzyme-catalyzed isomerization of RBP and G3P, respectively. The sequence is that of Pyridoxal 5'-phosphate synthase subunit PdxS from Methanococcus maripaludis (strain C5 / ATCC BAA-1333).